Reading from the N-terminus, the 316-residue chain is MIFFTLEHVLTHISLSIILIVITIFLMNLLVYEIEGLSYSSEKGMVASFLCITGLLVIRWIYSGHLPLSDLYESLMFLSWSFSIFYMIPYFRNKKSNLNVLTAPGTIFTQGFATSGVLREIHQSTILVPALQSQWLMMHVSMMVLSYAALLCGSLLSVALLVILFRKSSFTFSKYKGYYLPIGPLYFSEIQYVNEKKNIFLSFRNYHRYQLIQQLDCWSSRVISLGFLFLTIGILSGAVWANETWGSYWNWDPKETWAFITWTIFAIYLHTRTNKSLQSSNSAIVASIGFFIIWICYFGVNLLGIGLHSYGSFAIT.

The next 8 membrane-spanning stretches (helical) occupy residues 12 to 32 (HISL…LLVY), 44 to 64 (GMVA…IYSG), 71 to 91 (LYES…IPYF), 98 to 118 (LNVL…SGVL), 145 to 165 (LSYA…VILF), 222 to 242 (VISL…VWAN), 256 to 270 (TWAF…IYLH), and 283 to 303 (AIVA…VNLL).

Belongs to the CcmF/CycK/Ccl1/NrfE/CcsA family. As to quaternary structure, may interact with Ccs1.

Its subcellular location is the plastid. It is found in the chloroplast thylakoid membrane. In terms of biological role, required during biogenesis of c-type cytochromes (cytochrome c6 and cytochrome f) at the step of heme attachment. The protein is Cytochrome c biogenesis protein CcsA of Ranunculus macranthus (Large buttercup).